Consider the following 183-residue polypeptide: Holliday junction branch migration complex subunit RuvA (183 aa).

Residues 1-64 (MVVGIEGIIT…EDSNKFYGFL (64 aa)) form a domain I region. The domain II stretch occupies residues 65–139 (DKDEQKMFEM…DTRTKLENVS (75 aa)). Residue S139 is a region of interest, flexible linker. The segment at 139-183 (SDDKSEALAALLTLGFKQEKIISVLASAQATGTSELIKEALKKLR) is domain III.

Belongs to the RuvA family. Homotetramer. Forms an RuvA(8)-RuvB(12)-Holliday junction (HJ) complex. HJ DNA is sandwiched between 2 RuvA tetramers; dsDNA enters through RuvA and exits via RuvB. An RuvB hexamer assembles on each DNA strand where it exits the tetramer. Each RuvB hexamer is contacted by two RuvA subunits (via domain III) on 2 adjacent RuvB subunits; this complex drives branch migration. In the full resolvosome a probable DNA-RuvA(4)-RuvB(12)-RuvC(2) complex forms which resolves the HJ.

It is found in the cytoplasm. Its function is as follows. The RuvA-RuvB-RuvC complex processes Holliday junction (HJ) DNA during genetic recombination and DNA repair, while the RuvA-RuvB complex plays an important role in the rescue of blocked DNA replication forks via replication fork reversal (RFR). RuvA specifically binds to HJ cruciform DNA, conferring on it an open structure. The RuvB hexamer acts as an ATP-dependent pump, pulling dsDNA into and through the RuvAB complex. HJ branch migration allows RuvC to scan DNA until it finds its consensus sequence, where it cleaves and resolves the cruciform DNA. In Campylobacter jejuni subsp. doylei (strain ATCC BAA-1458 / RM4099 / 269.97), this protein is Holliday junction branch migration complex subunit RuvA.